Reading from the N-terminus, the 1138-residue chain is Nuclear pore complex-interacting protein family member B13 (1138 aa).

Residues 73 to 93 (VVITLWIVYLWVSLLKTIFWS) traverse the membrane as a helical segment. Disordered stretches follow at residues 242 to 578 (RMGH…NIKT) and 747 to 1138 (ERLR…RRLS). Residues 252–263 (QQHSITDNSLSL) show a composition bias toward polar residues. Over residues 349 to 359 (PLPPSAPPSAP) the composition is skewed to pro residues. Basic and acidic residues-rich tracts occupy residues 406 to 416 (DNIKTPAERLR), 448 to 458 (DNIKTPAERLR), 490 to 500 (DNIKTPAERLR), 532 to 542 (DNIKTPAERLR), 782 to 792 (DNIKTPAERLR), 824 to 834 (DNIKTPAERLR), 866 to 876 (DNIKTPAERLR), 908 to 918 (DNIKTPAERLR), 950 to 960 (DNIKTPAERLR), and 992 to 1002 (DNIKTPAERLR).

It belongs to the NPIP family.

It is found in the membrane. This Homo sapiens (Human) protein is Nuclear pore complex-interacting protein family member B13.